The sequence spans 393 residues: Sulfate adenylyltransferase (393 aa).

The protein belongs to the sulfate adenylyltransferase family.

It carries out the reaction sulfate + ATP + H(+) = adenosine 5'-phosphosulfate + diphosphate. Its pathway is sulfur metabolism; hydrogen sulfide biosynthesis; sulfite from sulfate: step 1/3. This chain is Sulfate adenylyltransferase, found in Symbiobacterium thermophilum (strain DSM 24528 / JCM 14929 / IAM 14863 / T).